The following is a 390-amino-acid chain: 5-hydroxytryptamine receptor 1B (390 aa).

Residues 1 to 46 (MEEPGAQCAPPXPAGSETWVPQANLSSAPSQNCSAKDYIYQDSIAL) lie on the Extracellular side of the membrane. N-linked (GlcNAc...) asparagine glycosylation is found at asparagine 24 and asparagine 32. Residues 47–72 (PWKVLLVMLLALITLATTLSNAFVIA) form a helical membrane-spanning segment. Over 73-86 (TVYRTRKLHTPANY) the chain is Cytoplasmic. The chain crosses the membrane as a helical span at residues 87 to 111 (LIASLAVTDLLVSILVMPISTMYTV). Over 112-119 (TGRWTLGQ) the chain is Extracellular. A helical membrane pass occupies residues 120–145 (VVCDFWLSSDITCCTASILHLCVIAL). Residues cysteine 122 and cysteine 199 are joined by a disulfide bond. The ergotamine site is built by aspartate 129 and threonine 134. The DRY motif; important for ligand-induced conformation changes and signaling motif lies at 146–148 (DRY). The Cytoplasmic portion of the chain corresponds to 146 to 165 (DRYWAITDAVEYSAKRTPKR). A helical transmembrane segment spans residues 166–184 (AAVMIALVWVFSISISLPP). Residues 185 to 205 (FFWRQAKAEEEVSECVVNTDH) lie on the Extracellular side of the membrane. Valine 201 contacts ergotamine. Residues 206-229 (ILYTVYSTVGAFYFPTLLLIALYG) traverse the membrane as a helical segment. Residues 230–315 (RIYVEARSRI…AARERKATKT (86 aa)) are Cytoplasmic-facing. The segment covering 259–272 (DSPGSTSSVTSINS) has biased composition (polar residues). The disordered stretch occupies residues 259-281 (DSPGSTSSVTSINSRVPDVPSES). The helical transmembrane segment at 316–337 (LGIILGAFIVCWLPFFIISLVM) threads the bilayer. At 338–347 (PICKDACWFH) the chain is on the extracellular side. The helical transmembrane segment at 348–370 (LAIFDFFTWLGYLNSLINPIIYT) threads the bilayer. Residues 365-369 (NPIIY) carry the NPxxY motif; important for ligand-induced conformation changes and signaling motif. The Cytoplasmic segment spans residues 371 to 390 (MSNEDFKQAFHKLIRFKCTS). A lipid anchor (S-palmitoyl cysteine) is attached at cysteine 388.

The protein belongs to the G-protein coupled receptor 1 family. Homodimer. Heterodimer with HTR1D. Post-translationally, phosphorylated. Desensitization of the receptor may be mediated by its phosphorylation. Palmitoylated.

It is found in the cell membrane. G-protein coupled receptor for 5-hydroxytryptamine (serotonin). Also functions as a receptor for ergot alkaloid derivatives, various anxiolytic and antidepressant drugs and other psychoactive substances, such as lysergic acid diethylamide (LSD). Ligand binding causes a conformation change that triggers signaling via guanine nucleotide-binding proteins (G proteins) and modulates the activity of downstream effectors, such as adenylate cyclase. HTR1B is coupled to G(i)/G(o) G alpha proteins and mediates inhibitory neurotransmission by inhibiting adenylate cyclase activity. Arrestin family members inhibit signaling via G proteins and mediate activation of alternative signaling pathways. Regulates the release of 5-hydroxytryptamine, dopamine and acetylcholine in the brain, and thereby affects neural activity, nociceptive processing, pain perception, mood and behavior. Besides, plays a role in vasoconstriction of cerebral arteries. This Gorilla gorilla gorilla (Western lowland gorilla) protein is 5-hydroxytryptamine receptor 1B (HTR1B).